Consider the following 66-residue polypeptide: Ocellatin-PT2 (66 aa).

Positions 1–22 (MAFLKKSLFLVLFLGLVSLSIC) are cleaved as a signal peptide. Residues 23-39 (DEEKRQDEDDDDDDDEE) constitute a propeptide that is removed on maturation. V66 bears the Valine amide mark.

In terms of tissue distribution, expressed by the skin glands.

It localises to the secreted. Has no antibacterial activity against Gram-negative bacteria E.coli ATCC 25922, S.pneumoniae ATCC 700603 and S.choleraesuis ATCC 14028 or against Gram-positive bacterium S.aureus ATCC 29313. Shows no hemolytic activity and no cytotoxicity. This is Ocellatin-PT2 from Leptodactylus pustulatus (Ceara white-lipped frog).